Reading from the N-terminus, the 66-residue chain is Vesicular acetylcholine transporter (66 aa).

The helical transmembrane segment at 1–15 (GMGLANLLYAPVLLL) threads the bilayer. The Cytoplasmic segment spans residues 16 to 66 (LRNVGLLTRSRSERDVLLDEPPQGLYDAVRLRERPVSGQDGEPRSPPGPFD). Positions 43-66 (AVRLRERPVSGQDGEPRSPPGPFD) are disordered.

This sequence belongs to the major facilitator superfamily. Vesicular transporter family. Interacts with SEC14L1.

The protein localises to the cytoplasmic vesicle. It localises to the secretory vesicle. The protein resides in the synaptic vesicle membrane. The enzyme catalyses acetylcholine(out) + 2 H(+)(in) = acetylcholine(in) + 2 H(+)(out). It carries out the reaction choline(in) + 2 H(+)(out) = choline(out) + 2 H(+)(in). The catalysed reaction is serotonin(in) + 2 H(+)(out) = serotonin(out) + 2 H(+)(in). Functionally, electrogenic antiporter that exchanges one cholinergic neurotransmitter, acetylcholine or choline, with two intravesicular protons across the membrane of synaptic vesicles. Uses the electrochemical proton gradient established by the V-type proton-pump ATPase to store neurotransmitters inside the vesicles prior to their release via exocytosis. Determines cholinergic vesicular quantal size at presynaptic nerve terminals in developing neuro-muscular junctions with an impact on motor neuron differentiation and innervation pattern. Part of forebrain cholinergic system, regulates hippocampal synapse transmissions that underlie spatial memory formation. Can transport serotonin. The polypeptide is Vesicular acetylcholine transporter (SLC18A3) (Macaca fuscata fuscata (Japanese macaque)).